The sequence spans 830 residues: DNA gyrase subunit A (830 aa).

The Topo IIA-type catalytic domain occupies 33–497; that stretch reads LPDVRDGLKP…AENDIDIEDL (465 aa). The O-(5'-phospho-DNA)-tyrosine intermediate role is filled by Tyr-121. Positions 524–530 match the GyrA-box motif; it reads QKRGGRG. The tract at residues 805–830 is disordered; that stretch reads KDDSEQLEDSEEVSEVHDAEENNSEE.

Belongs to the type II topoisomerase GyrA/ParC subunit family. Heterotetramer, composed of two GyrA and two GyrB chains. In the heterotetramer, GyrA contains the active site tyrosine that forms a transient covalent intermediate with DNA, while GyrB binds cofactors and catalyzes ATP hydrolysis.

Its subcellular location is the cytoplasm. The catalysed reaction is ATP-dependent breakage, passage and rejoining of double-stranded DNA.. Its function is as follows. A type II topoisomerase that negatively supercoils closed circular double-stranded (ds) DNA in an ATP-dependent manner to modulate DNA topology and maintain chromosomes in an underwound state. Negative supercoiling favors strand separation, and DNA replication, transcription, recombination and repair, all of which involve strand separation. Also able to catalyze the interconversion of other topological isomers of dsDNA rings, including catenanes and knotted rings. Type II topoisomerases break and join 2 DNA strands simultaneously in an ATP-dependent manner. The sequence is that of DNA gyrase subunit A from Clostridium acetobutylicum (strain ATCC 824 / DSM 792 / JCM 1419 / IAM 19013 / LMG 5710 / NBRC 13948 / NRRL B-527 / VKM B-1787 / 2291 / W).